We begin with the raw amino-acid sequence, 434 residues long: Double-stranded RNA-binding protein 2 (434 aa).

DRBM domains lie at 1 to 70 and 87 to 155; these read MYKN…ALSN and VYKN…SLKQ. A disordered region spans residues 402–434; it reads EKTASKETERAEFKDSSKGEPETARERLENLKI.

In terms of assembly, heterodimer with DRB1 or DRB5. Interacts with DCL1 and DCL5.

The protein resides in the cytoplasm. Binds double-stranded RNA. May be involved in RNA-mediated silencing. In Arabidopsis thaliana (Mouse-ear cress), this protein is Double-stranded RNA-binding protein 2 (DRB2).